We begin with the raw amino-acid sequence, 91 residues long: Acyl-CoA-binding domain-containing protein 2 (91 aa).

The ACB domain occupies 3–88 (LQEEFEEFAE…VKQLLEEASA (86 aa)). Residues lysine 15, 30-34 (YGLYK), lysine 52, lysine 56, and tyrosine 75 each bind an acyl-CoA.

The protein belongs to the ACBP family. In terms of tissue distribution, highly expressed in leaves. Expressed at low levels in roots and seeds.

The protein localises to the cytoplasm. It localises to the cytosol. In terms of biological role, binds medium- and long-chain acyl-CoA esters with high affinity. Can interact in vitro with linolenoyl-CoA. Binds palmitoyl-CoA and linoleoyl-CoA in vitro. Binds phosphatidic acid (PA) and phosphatidylcholine (PC) in vitro. May play a role in the biosynthesis of phospholipids. This Oryza sativa subsp. japonica (Rice) protein is Acyl-CoA-binding domain-containing protein 2.